The sequence spans 461 residues: Putative transcription initiation factor IIB-like protein (461 aa).

The interval 113–142 is disordered; sequence SESLENIQSENSENNDNFTDNNTKKSPTKS. The span at 121–137 shows a compositional bias: low complexity; sequence SENSENNDNFTDNNTKK. Residues 141–173 form a TFIIB-type zinc finger; the sequence is KSRICSGCGSKGTLLEDQSSSVLVCSECGMIND. The Zn(2+) site is built by Cys-145, Cys-165, and Cys-168. Repeat copies occupy residues 246–327 and 360–430.

It belongs to the TFIIB family.

This is Putative transcription initiation factor IIB-like protein from Acanthamoeba polyphaga mimivirus (APMV).